The sequence spans 95 residues: Small ribosomal subunit protein uS19 (95 aa).

The segment at 76–95 (PTRTFRGHGGKKADKRGKLK) is disordered. The span at 80-95 (FRGHGGKKADKRGKLK) shows a compositional bias: basic residues.

It belongs to the universal ribosomal protein uS19 family.

Functionally, protein S19 forms a complex with S13 that binds strongly to the 16S ribosomal RNA. The protein is Small ribosomal subunit protein uS19 of Herpetosiphon aurantiacus (strain ATCC 23779 / DSM 785 / 114-95).